A 71-amino-acid polypeptide reads, in one-letter code: uncharacterized protein (71 aa).

Belongs to the ycf40 family.

It localises to the plastid. Its subcellular location is the chloroplast. This is an uncharacterized protein from Pyropia yezoensis (Susabi-nori).